The primary structure comprises 348 residues: QSGNPFSGRTLLVNSDYSSKLDQTRQAFLSRGDQTNAAKVKYVQEKVGTFYWISNIFLLRDIDVAIQNARAAKARGENPIVGLVLYNLPDRDCSAGESSGELKLSQNGLNRYKNEYVNPFAQKLKAASDVQFAVILEPDAIGNMVTGTSAFCRNARGPQQEAIGYAISQLQASHIHLYLDVANGGWLGWADKLEPTAQEVATILQKAGNNAKIRGFSSNVSNYNPYSTSNPPPYTSGSPSPDESRYATNIANAMRQRGLPTQFIIDQSRVALSGARSEWGQWCNVNPAGFGQPFTTNTNNPNVDAIVWVKPGGESDGQCGMGGAPAAGMWFDAYAQMLTQNAHDEIAR.

Residues Trp-52 and Ser-54 each contribute to the substrate site. Catalysis depends on proton donor residues Asp-92 and Asp-139. 6 residues coordinate substrate: Asn-183, Trp-186, Asn-222, Trp-282, Lys-310, and Glu-314. Low complexity predominate over residues 222–241 (NYNPYSTSNPPPYTSGSPSP). Residues 222-244 (NYNPYSTSNPPPYTSGSPSPDES) are disordered.

Belongs to the glycosyl hydrolase 6 (cellulase B) family. In terms of assembly, monomer.

The enzyme catalyses Endohydrolysis of (1-&gt;4)-beta-D-glucosidic linkages in cellulose, lichenin and cereal beta-D-glucans.. Its function is as follows. Plays a central role in the recycling of plant biomass. The biological conversion of cellulose to glucose generally requires three types of hydrolytic enzymes: (1) Endoglucanases which cut internal beta-1,4-glucosidic bonds; (2) Exocellobiohydrolases that cut the disaccharide cellobiose from the non-reducing end of the cellulose polymer chain; (3) Beta-1,4-glucosidases which hydrolyze the cellobiose and other short cello-oligosaccharides to glucose. The polypeptide is Endoglucanase-6B (Humicola insolens (Soft-rot fungus)).